Here is a 699-residue protein sequence, read N- to C-terminus: Endogenous retrovirus group K member 19 Env polyprotein (699 aa).

Residues Met1–Pro47 are disordered. A signal peptide spans Met1–Ser89. Over residues Ala10–Arg20 the composition is skewed to basic residues. At Leu90 to Thr632 the chain is on the extracellular side. 7 N-linked (GlcNAc...) asparagine glycosylation sites follow: Asn100, Asn128, Asn153, Asn274, Asn355, Asn372, and Asn461. The interval Phe466–Val486 is fusion peptide. N-linked (GlcNAc...) asparagine glycosylation is found at Asn507, Asn554, Asn566, and Asn585. Residues Ile633–Leu653 traverse the membrane as a helical segment. Topologically, residues Val654 to Val699 are cytoplasmic.

It belongs to the beta type-B retroviral envelope protein family. HERV class-II K(HML-2) env subfamily. In terms of assembly, the surface (SU) and transmembrane (TM) proteins form a heterodimer. SU and TM are attached by noncovalent interactions or by a labile interchain disulfide bond. Specific enzymatic cleavages in vivo yield the mature SU and TM proteins.

Its subcellular location is the cell membrane. The protein localises to the virion. Its function is as follows. Retroviral envelope proteins mediate receptor recognition and membrane fusion during early infection. Endogenous envelope proteins may have kept, lost or modified their original function during evolution. This endogenous envelope protein has lost its original fusogenic properties. SU mediates receptor recognition. Functionally, TM anchors the envelope heterodimer to the viral membrane through one transmembrane domain. The other hydrophobic domain, called fusion peptide, mediates fusion of the viral membrane with the target cell membrane. This chain is Endogenous retrovirus group K member 19 Env polyprotein (ERVK-19), found in Homo sapiens (Human).